A 117-amino-acid chain; its full sequence is Aspartate 1-decarboxylase (117 aa).

Catalysis depends on Ser25, which acts as the Schiff-base intermediate with substrate; via pyruvic acid. Ser25 bears the Pyruvic acid (Ser) mark. Thr57 is a substrate binding site. Catalysis depends on Tyr58, which acts as the Proton donor. Substrate is bound at residue 73–75 (GAA).

It belongs to the PanD family. In terms of assembly, heterooctamer of four alpha and four beta subunits. Pyruvate serves as cofactor. In terms of processing, is synthesized initially as an inactive proenzyme, which is activated by self-cleavage at a specific serine bond to produce a beta-subunit with a hydroxyl group at its C-terminus and an alpha-subunit with a pyruvoyl group at its N-terminus.

It localises to the cytoplasm. The enzyme catalyses L-aspartate + H(+) = beta-alanine + CO2. It participates in cofactor biosynthesis; (R)-pantothenate biosynthesis; beta-alanine from L-aspartate: step 1/1. Its function is as follows. Catalyzes the pyruvoyl-dependent decarboxylation of aspartate to produce beta-alanine. This is Aspartate 1-decarboxylase from Bacteroides thetaiotaomicron (strain ATCC 29148 / DSM 2079 / JCM 5827 / CCUG 10774 / NCTC 10582 / VPI-5482 / E50).